The chain runs to 192 residues: Putative acetyltransferase SH0499 (192 aa).

This sequence belongs to the transferase hexapeptide repeat family.

This Staphylococcus haemolyticus (strain JCSC1435) protein is Putative acetyltransferase SH0499.